The following is a 273-amino-acid chain: HTH-type transcriptional activator RhaS (273 aa).

Residues 174 to 272 (YQLLDWLQNN…SQSPRDLRSQ (99 aa)) enclose the HTH araC/xylS-type domain. 2 DNA-binding regions (H-T-H motif) span residues 191 to 212 (PELADRFALPLRTLHRQLKNKT) and 239 to 262 (VTDIAYLCGFGDSNHFSTLFKREF).

In terms of assembly, binds DNA as a dimer.

The protein resides in the cytoplasm. Its function is as follows. Activates expression of the rhaBAD and rhaT operons. This is HTH-type transcriptional activator RhaS from Yersinia pseudotuberculosis serotype O:1b (strain IP 31758).